The sequence spans 299 residues: Nicotinate-nucleotide pyrophosphorylase [carboxylating] (299 aa).

The segment at 8–12 is important for hexamer formation; the sequence is HLLPP. Residues Arg102, 138–139, 160–161, Lys171, Glu201, Asp222, 248–250, and Gly270 each bind quinolinate; these read RK, HR, and SGG. A Phosphothreonine modification is found at Thr291.

The protein belongs to the NadC/ModD family. Hexamer formed by 3 homodimers.

It carries out the reaction nicotinate beta-D-ribonucleotide + CO2 + diphosphate = quinolinate + 5-phospho-alpha-D-ribose 1-diphosphate + 2 H(+). Its pathway is cofactor biosynthesis; NAD(+) biosynthesis; nicotinate D-ribonucleotide from quinolinate: step 1/1. Its function is as follows. Involved in the catabolism of quinolinic acid (QA). In Bos taurus (Bovine), this protein is Nicotinate-nucleotide pyrophosphorylase [carboxylating] (QPRT).